Here is a 609-residue protein sequence, read N- to C-terminus: Mitochondrial nucleoid-associated protein 1 (609 aa).

Residues 1 to 554 (MSDNPPRMEV…CNTTIRKSGF (554 aa)) are Extracellular-facing. Disordered stretches follow at residues 133-163 (QEET…GESR) and 406-425 (SPEG…QASH). Basic and acidic residues predominate over residues 146–161 (TSPKRELAEDLPKSGE). The helical transmembrane segment at 555–571 (GGITMLSTGYFVLCCSW) threads the bilayer. Residues 572–609 (SFRRLKKLCRPLPWKSTVPPSVGVAKTTGDCRSKTCLD) are Cytoplasmic-facing.

It is found in the mitochondrion inner membrane. Its subcellular location is the mitochondrion matrix. The protein resides in the mitochondrion nucleoid. Critical regulator of mitochondrial DNA (mtDNA) abundance. Binds dsDNA throughout the mitochondrial genome without sequence specificity and controls mtDNA copy number by promoting its replication. Also plays important roles in mitochondrial metabolism and cell proliferation. The protein is Mitochondrial nucleoid-associated protein 1 of Pongo abelii (Sumatran orangutan).